The chain runs to 231 residues: 5'-methylthioadenosine/S-adenosylhomocysteine nucleosidase (231 aa).

Residue Glu-12 is the Proton acceptor of the active site. Substrate is bound by residues Gly-78, Met-153, and 174–175; that span reads ME. Asp-198 acts as the Proton donor in catalysis.

Belongs to the PNP/UDP phosphorylase family. MtnN subfamily.

The catalysed reaction is S-adenosyl-L-homocysteine + H2O = S-(5-deoxy-D-ribos-5-yl)-L-homocysteine + adenine. The enzyme catalyses S-methyl-5'-thioadenosine + H2O = 5-(methylsulfanyl)-D-ribose + adenine. It carries out the reaction 5'-deoxyadenosine + H2O = 5-deoxy-D-ribose + adenine. The protein operates within amino-acid biosynthesis; L-methionine biosynthesis via salvage pathway; S-methyl-5-thio-alpha-D-ribose 1-phosphate from S-methyl-5'-thioadenosine (hydrolase route): step 1/2. Functionally, catalyzes the irreversible cleavage of the glycosidic bond in both 5'-methylthioadenosine (MTA) and S-adenosylhomocysteine (SAH/AdoHcy) to adenine and the corresponding thioribose, 5'-methylthioribose and S-ribosylhomocysteine, respectively. Also cleaves 5'-deoxyadenosine, a toxic by-product of radical S-adenosylmethionine (SAM) enzymes, into 5-deoxyribose and adenine. The chain is 5'-methylthioadenosine/S-adenosylhomocysteine nucleosidase from Bacillus cereus (strain B4264).